Reading from the N-terminus, the 1350-residue chain is ABC-type transporter MDR1 (1350 aa).

Residues 1-11 (MDTVHEGHHGS) show a composition bias toward basic and acidic residues. The disordered stretch occupies residues 1–84 (MDTVHEGHHG…DEGEDPFAHL (84 aa)). Residues 22–33 (VEVTNYEKTQLG) are compositionally biased toward polar residues. The span at 52–63 (KKHKSQKEKKHK) shows a compositional bias: basic residues. The 291-residue stretch at 121 to 411 (VLSALSSIIG…VAPNIQAFTT (291 aa)) folds into the ABC transmembrane type-1 1 domain. The next 6 helical transmembrane spans lie at 124-144 (ALSS…FGGL), 170-190 (LYFL…TAGF), 243-263 (KVGL…VSFI), 271-291 (ILMS…GFIV), 350-370 (GSMI…AFWM), and 380-400 (IEVG…FALG). In terms of domain architecture, ABC transporter 1 spans 446 to 691 (IELRNIRHIY…QGAYYNLVEA (246 aa)). 481–488 (GESGSGKS) provides a ligand contact to ATP. The segment covering 712–731 (KDQNLKHETTKGEQPEDGLK) has biased composition (basic and acidic residues). Residues 712-734 (KDQNLKHETTKGEQPEDGLKLAR) form a disordered region. A run of 6 helical transmembrane segments spans residues 779–799 (IGII…VFFA), 830–850 (FMLA…FAVC), 903–923 (LGTI…SLAI), 929–949 (LVCI…FWML), 1014–1034 (ASQS…GTLI), and 1044–1064 (FFLC…IFSF). The 292-residue stretch at 779–1070 (IGIICSVITG…IFSFAPDMGK (292 aa)) folds into the ABC transmembrane type-1 2 domain. Residues 1105–1343 (IEFRDVHFRY…RGRYWELVNL (239 aa)) form the ABC transporter 2 domain. N-linked (GlcNAc...) asparagine glycosylation occurs at asparagine 1127. Residue 1140 to 1147 (GASGCGKS) participates in ATP binding.

This sequence belongs to the ABC transporter superfamily. ABCB family. Multidrug resistance exporter (TC 3.A.1.201) subfamily.

The protein resides in the cell membrane. Its function is as follows. ABC-type transporter that is involved in the secretion of liamocins, glycolipids (also called heavy oils) composed of a single mannitol or arabitol headgroup linked to either three, four or even six 3,5-dihydroxydecanoic ester tail-groups. The sequence is that of ABC-type transporter MDR1 from Aureobasidium melanogenum (Aureobasidium pullulans var. melanogenum).